The primary structure comprises 430 residues: Enolase (430 aa).

Q164 is a binding site for (2R)-2-phosphoglycerate. The active-site Proton donor is the E208. The Mg(2+) site is built by D245, E288, and D315. (2R)-2-phosphoglycerate is bound by residues K340, R369, S370, and K391. The active-site Proton acceptor is the K340.

This sequence belongs to the enolase family. Mg(2+) is required as a cofactor.

It localises to the cytoplasm. The protein localises to the secreted. Its subcellular location is the cell surface. It carries out the reaction (2R)-2-phosphoglycerate = phosphoenolpyruvate + H2O. Its pathway is carbohydrate degradation; glycolysis; pyruvate from D-glyceraldehyde 3-phosphate: step 4/5. In terms of biological role, catalyzes the reversible conversion of 2-phosphoglycerate (2-PG) into phosphoenolpyruvate (PEP). It is essential for the degradation of carbohydrates via glycolysis. The chain is Enolase from Pyrococcus furiosus (strain ATCC 43587 / DSM 3638 / JCM 8422 / Vc1).